The chain runs to 392 residues: Phosphoglycerate kinase (392 aa).

Substrate-binding positions include 21-23, arginine 36, 59-62, arginine 113, and arginine 146; these read DFN and HLGR. ATP contacts are provided by residues lysine 197, glutamate 319, and 345–348; that span reads GGDT.

The protein belongs to the phosphoglycerate kinase family. Monomer.

Its subcellular location is the cytoplasm. The catalysed reaction is (2R)-3-phosphoglycerate + ATP = (2R)-3-phospho-glyceroyl phosphate + ADP. It participates in carbohydrate degradation; glycolysis; pyruvate from D-glyceraldehyde 3-phosphate: step 2/5. This chain is Phosphoglycerate kinase, found in Francisella tularensis subsp. holarctica (strain FTNF002-00 / FTA).